The following is a 354-amino-acid chain: Trans-L-3-hydroxyproline dehydratase (354 aa).

The active-site Proton acceptor is Cys104. Substrate contacts are provided by residues 105-106 (GH), Asp269, and 274-275 (GS).

It belongs to the proline racemase family. Homodimer.

It catalyses the reaction trans-3-hydroxy-L-proline = 1-pyrroline-2-carboxylate + H2O. Catalyzes the dehydration of trans-3-hydroxy-L-proline to Delta(1)-pyrroline-2-carboxylate (Pyr2C). In Bos taurus (Bovine), this protein is Trans-L-3-hydroxyproline dehydratase (L3HYPDH).